The primary structure comprises 93 residues: Small ribosomal subunit protein uS19 (93 aa).

Belongs to the universal ribosomal protein uS19 family.

Functionally, protein S19 forms a complex with S13 that binds strongly to the 16S ribosomal RNA. This is Small ribosomal subunit protein uS19 from Saccharopolyspora erythraea (strain ATCC 11635 / DSM 40517 / JCM 4748 / NBRC 13426 / NCIMB 8594 / NRRL 2338).